A 252-amino-acid polypeptide reads, in one-letter code: 5'-nucleotidase SurE (252 aa).

4 residues coordinate a divalent metal cation: Asp8, Asp9, Ser39, and Asn96.

Belongs to the SurE nucleotidase family. Requires a divalent metal cation as cofactor.

The protein resides in the cytoplasm. The enzyme catalyses a ribonucleoside 5'-phosphate + H2O = a ribonucleoside + phosphate. Nucleotidase that shows phosphatase activity on nucleoside 5'-monophosphates. The polypeptide is 5'-nucleotidase SurE (Petrotoga mobilis (strain DSM 10674 / SJ95)).